A 1475-amino-acid chain; its full sequence is Sex-determining transformer protein 2 (1475 aa).

A signal peptide spans Met1–Ser31. The next 11 membrane-spanning stretches (helical) occupy residues Thr446–Trp466, Ala474–Thr494, Gly496–Leu516, Trp589–Ser609, Gly737–Ile757, Ala902–Phe922, Ala928–Ile948, Phe952–Phe972, Ile979–Leu999, Ile1034–Ile1054, and Ile1060–Ile1080. The tract at residues Glu1133–Ser1273 is interaction with fem-3. 2 disordered regions span residues Pro1142–Thr1194 and Asn1267–Pro1330. Residues Arg1178–Arg1188 show a composition bias toward basic residues. A compositionally biased stretch (basic and acidic residues) spans Gln1276 to Asp1310. The segment at Cys1392–Arg1413 is MX regulatory domain; required for tra-1 binding. The segment at Thr1424–Val1475 is disordered. Over residues Leu1451–Asp1469 the composition is skewed to basic and acidic residues.

In terms of assembly, interacts with tra-1 and fem-3. Post-translationally, undergoes cleavage by tra-3 to produce a feminizing carboxy-terminal isoform Tra-2B. In terms of tissue distribution, somatic and germline tissues. Isoform Tra-2B is specific to oocytes.

It localises to the membrane. Plays a major role in controlling sexual cell fates. Promotes female development in XX animals where it sequesters one or more of the FEM proteins to the membrane thereby freeing the tra-1 protein (a putative transcription factor) to enter the nucleus and promote female development. In XO animals it acts as a receptor for her-1 which prevents it from binding to FEM proteins thereby repressing the activity of tra-1. Negatively regulates male development when bound to fem-3 and is required together with tra-1 for promoting spermatogenesis. Also required for feminizing tra-3 activity. This Caenorhabditis elegans protein is Sex-determining transformer protein 2 (tra-2).